We begin with the raw amino-acid sequence, 351 residues long: Phosphoribosylformylglycinamidine cyclo-ligase (351 aa).

Belongs to the AIR synthase family.

The protein resides in the cytoplasm. It carries out the reaction 2-formamido-N(1)-(5-O-phospho-beta-D-ribosyl)acetamidine + ATP = 5-amino-1-(5-phospho-beta-D-ribosyl)imidazole + ADP + phosphate + H(+). Its pathway is purine metabolism; IMP biosynthesis via de novo pathway; 5-amino-1-(5-phospho-D-ribosyl)imidazole from N(2)-formyl-N(1)-(5-phospho-D-ribosyl)glycinamide: step 2/2. The polypeptide is Phosphoribosylformylglycinamidine cyclo-ligase (Burkholderia ambifaria (strain MC40-6)).